Consider the following 350-residue polypeptide: Phenylalanine--tRNA ligase alpha subunit (350 aa).

A Mg(2+)-binding site is contributed by Glu257.

Belongs to the class-II aminoacyl-tRNA synthetase family. Phe-tRNA synthetase alpha subunit type 1 subfamily. As to quaternary structure, tetramer of two alpha and two beta subunits. Mg(2+) is required as a cofactor.

It is found in the cytoplasm. It catalyses the reaction tRNA(Phe) + L-phenylalanine + ATP = L-phenylalanyl-tRNA(Phe) + AMP + diphosphate + H(+). The chain is Phenylalanine--tRNA ligase alpha subunit from Listeria monocytogenes serovar 1/2a (strain ATCC BAA-679 / EGD-e).